A 440-amino-acid chain; its full sequence is tRNA modification GTPase MnmE (440 aa).

Positions 22, 79, and 118 each coordinate (6S)-5-formyl-5,6,7,8-tetrahydrofolate. Residues 214–366 enclose the TrmE-type G domain; it reads GLIFTILGKP…LKTMLEAEAR (153 aa). GTP-binding positions include 224 to 229, 243 to 249, and 268 to 271; these read NAGKSS, SSQPGTT, and DTAG. Mg(2+)-binding residues include Ser-228 and Thr-249. Lys-440 is a (6S)-5-formyl-5,6,7,8-tetrahydrofolate binding site.

Belongs to the TRAFAC class TrmE-Era-EngA-EngB-Septin-like GTPase superfamily. TrmE GTPase family. Homodimer. Heterotetramer of two MnmE and two MnmG subunits. K(+) is required as a cofactor.

It localises to the cytoplasm. In terms of biological role, exhibits a very high intrinsic GTPase hydrolysis rate. Involved in the addition of a carboxymethylaminomethyl (cmnm) group at the wobble position (U34) of certain tRNAs, forming tRNA-cmnm(5)s(2)U34. The sequence is that of tRNA modification GTPase MnmE from Granulibacter bethesdensis (strain ATCC BAA-1260 / CGDNIH1).